The sequence spans 506 residues: Protein nucleotidyltransferase YdiU (506 aa).

Residues Gly95, Gly97, Arg98, Lys118, Asp130, Gly131, Arg181, and Arg188 each contribute to the ATP site. Asp257 functions as the Proton acceptor in the catalytic mechanism. Residues Asn258 and Asp267 each contribute to the Mg(2+) site. Asp267 serves as a coordination point for ATP. The segment at 487–506 (KHYQDAPTPDQRVKQTFCGT) is disordered.

Belongs to the SELO family. Mg(2+) serves as cofactor. Requires Mn(2+) as cofactor.

It carries out the reaction L-seryl-[protein] + ATP = 3-O-(5'-adenylyl)-L-seryl-[protein] + diphosphate. It catalyses the reaction L-threonyl-[protein] + ATP = 3-O-(5'-adenylyl)-L-threonyl-[protein] + diphosphate. The enzyme catalyses L-tyrosyl-[protein] + ATP = O-(5'-adenylyl)-L-tyrosyl-[protein] + diphosphate. The catalysed reaction is L-histidyl-[protein] + UTP = N(tele)-(5'-uridylyl)-L-histidyl-[protein] + diphosphate. It carries out the reaction L-seryl-[protein] + UTP = O-(5'-uridylyl)-L-seryl-[protein] + diphosphate. It catalyses the reaction L-tyrosyl-[protein] + UTP = O-(5'-uridylyl)-L-tyrosyl-[protein] + diphosphate. Functionally, nucleotidyltransferase involved in the post-translational modification of proteins. It can catalyze the addition of adenosine monophosphate (AMP) or uridine monophosphate (UMP) to a protein, resulting in modifications known as AMPylation and UMPylation. This Shewanella denitrificans (strain OS217 / ATCC BAA-1090 / DSM 15013) protein is Protein nucleotidyltransferase YdiU.